Here is an 84-residue protein sequence, read N- to C-terminus: U21-theraphotoxin-Cg1a 1 (84 aa).

The first 21 residues, 1-21 (MKVSVLITLAVLGVMFLLTSA), serve as a signal peptide directing secretion. Positions 22–47 (EERGSDQMDSPAWLKSMEIIFQSEER) are excised as a propeptide. 3 disulfide bridges follow: cysteine 49/cysteine 63, cysteine 56/cysteine 68, and cysteine 62/cysteine 76. Valine 82 bears the Valine amide mark.

It belongs to the neurotoxin 10 (Hwtx-1) family. 05 (F4a) subfamily. Expressed by the venom gland.

The protein resides in the secreted. Its function is as follows. Probable ion channel inhibitor. The chain is U21-theraphotoxin-Cg1a 1 from Chilobrachys guangxiensis (Chinese earth tiger tarantula).